A 256-amino-acid polypeptide reads, in one-letter code: Floral homeotic protein APETALA 1-1 (256 aa).

The MADS-box domain occupies 1 to 61 (MGRGRVQLKR…GKLFEYSTDS (61 aa)). Residues 88 to 178 (NTNWSMEYNR…SKQIKEREKV (91 aa)) form the K-box domain.

As to quaternary structure, homodimer capable of binding to CArG-box sequences. In terms of tissue distribution, expressed in some of the meristems of arrest-stage broccoli heads.

It is found in the nucleus. Transcription factor that promotes early floral meristem identity in synergy with LEAFY. Displays a redundant function with CAULIFLOWER in the up-regulation of LEAFY. Required subsequently for the transition of an inflorescence meristem into a floral meristem, and for the normal development of sepals and petals in flowers. Regulates positively B class homeotic proteins. This is Floral homeotic protein APETALA 1-1 (1AP1) from Brassica oleracea var. italica (Broccoli).